Consider the following 203-residue polypeptide: GTP cyclohydrolase-2 (203 aa).

GTP is bound at residue 49–53 (RIHSE). 3 residues coordinate Zn(2+): C54, C65, and C67. Residues Q70, 92 to 94 (EGR), and T114 contribute to the GTP site. Residue D126 is the Proton acceptor of the active site. The active-site Nucleophile is R128. GTP contacts are provided by T149 and K154.

Belongs to the GTP cyclohydrolase II family. Requires Zn(2+) as cofactor.

The catalysed reaction is GTP + 4 H2O = 2,5-diamino-6-hydroxy-4-(5-phosphoribosylamino)-pyrimidine + formate + 2 phosphate + 3 H(+). The protein operates within cofactor biosynthesis; riboflavin biosynthesis; 5-amino-6-(D-ribitylamino)uracil from GTP: step 1/4. Functionally, catalyzes the conversion of GTP to 2,5-diamino-6-ribosylamino-4(3H)-pyrimidinone 5'-phosphate (DARP), formate and pyrophosphate. The sequence is that of GTP cyclohydrolase-2 from Shewanella sp. (strain MR-7).